Reading from the N-terminus, the 256-residue chain is MSKRPADIIISTPGSKVRRRLNFDSPYSSRAAVPTVRVTKRQSWTNRPINRKPRWYRMYRSPDVPKGCEGPCKVQSFESRHDVVHIGKVMCISDVTRGIGLTHRVGKRFCVKSIYILGKIWMDENIKTKNHTNSVMFFLVRDRRPVDKPQDFGEVFNMFDNEPSTATVKNMHRDRYQVLRKWHATVTGGQYASKEQALVRRFFRVNNYVVYNQQEAGKYENHTENALMLYMACTHASNPVYATLKIRIYFYDSVSN.

The Bipartite nuclear localization signal signature appears at 3–20; that stretch reads KRPADIIISTPGSKVRRR. Residues 40 to 54 carry the Nuclear localization signal motif; sequence KRQSWTNRPINRKPR. A zinc finger spans residues 68-85; it reads CEGPCKVQSFESRHDVVH. Residues 101 to 122 carry the Nuclear export signal motif; it reads LTHRVGKRFCVKSIYILGKIWM. Positions 200 to 247 match the Bipartite nuclear localization signal motif; the sequence is RRFFRVNNYVVYNQQEAGKYENHTENALMLYMACTHASNPVYATLKIR.

The protein belongs to the geminiviridae capsid protein family. As to quaternary structure, homomultimer. Binds to single-stranded and double-stranded viral DNA. Interacts (via nuclear localization signals) with host importin alpha-1a.

The protein localises to the virion. It is found in the host nucleus. Encapsidates the viral DNA into characteristic twinned ('geminate') particles. Binds the genomic viral ssDNA and shuttles it into and out of the cell nucleus. The CP of bipartite geminiviruses is not required for cell-to-cell or systemic movement. In Manihot esculenta (Cassava), this protein is Capsid protein.